Here is a 187-residue protein sequence, read N- to C-terminus: Translation initiation factor IF-3 (187 aa).

This sequence belongs to the IF-3 family. Monomer.

The protein localises to the cytoplasm. In terms of biological role, IF-3 binds to the 30S ribosomal subunit and shifts the equilibrium between 70S ribosomes and their 50S and 30S subunits in favor of the free subunits, thus enhancing the availability of 30S subunits on which protein synthesis initiation begins. The chain is Translation initiation factor IF-3 from Leptospira biflexa serovar Patoc (strain Patoc 1 / Ames).